A 52-amino-acid chain; its full sequence is MKKYGCLVCGYVYDPAKGDPDHGIAPGTAFEDLPADWVCPLCGVSKDEFEPL.

Position 1 is an N-formylmethionine; partial (methionine 1). Residues 1 to 52 (MKKYGCLVCGYVYDPAKGDPDHGIAPGTAFEDLPADWVCPLCGVSKDEFEPL) enclose the Rubredoxin-like domain. The Fe cation site is built by cysteine 6, cysteine 9, cysteine 39, and cysteine 42.

Belongs to the rubredoxin family. The cofactor is Fe(3+). In terms of processing, observed in four forms, with and without iron, and with and without formylation at Met-1.

Rubredoxin is a small nonheme, iron protein lacking acid-labile sulfide. Its single Fe, chelated to 4 Cys, functions as an electron acceptor and may also stabilize the conformation of the molecule. The sequence is that of Rubredoxin from Heliobacterium mobile (Heliobacillus mobilis).